A 208-amino-acid polypeptide reads, in one-letter code: FMN-dependent NADH:quinone oxidoreductase 4 (208 aa).

It belongs to the azoreductase type 1 family. Homodimer. FMN serves as cofactor.

The enzyme catalyses 2 a quinone + NADH + H(+) = 2 a 1,4-benzosemiquinone + NAD(+). It catalyses the reaction N,N-dimethyl-1,4-phenylenediamine + anthranilate + 2 NAD(+) = 2-(4-dimethylaminophenyl)diazenylbenzoate + 2 NADH + 2 H(+). Its function is as follows. Quinone reductase that provides resistance to thiol-specific stress caused by electrophilic quinones. Functionally, also exhibits azoreductase activity. Catalyzes the reductive cleavage of the azo bond in aromatic azo compounds to the corresponding amines. The chain is FMN-dependent NADH:quinone oxidoreductase 4 from Bacillus cereus (strain ATCC 10987 / NRS 248).